Reading from the N-terminus, the 315-residue chain is Ester hydrolase C11orf54 (315 aa).

3 residues coordinate Zn(2+): H266, H268, and H278.

In terms of assembly, monomer. The cofactor is Zn(2+).

The protein localises to the nucleus. It localises to the cytoplasm. In terms of biological role, exhibits ester hydrolase activity on the substrate p-nitrophenyl acetate, in vitro. Regulates DNA damage and repair by regulating HIF1A degradation via chaperone-mediated autophagy (CMA). Probably non-functional. This Homo sapiens (Human) protein is Ester hydrolase C11orf54 (C11orf54).